Reading from the N-terminus, the 122-residue chain is Large ribosomal subunit protein bL12 (122 aa).

The protein belongs to the bacterial ribosomal protein bL12 family. Homodimer. Part of the ribosomal stalk of the 50S ribosomal subunit. Forms a multimeric L10(L12)X complex, where L10 forms an elongated spine to which 2 to 4 L12 dimers bind in a sequential fashion. Binds GTP-bound translation factors.

Functionally, forms part of the ribosomal stalk which helps the ribosome interact with GTP-bound translation factors. Is thus essential for accurate translation. The sequence is that of Large ribosomal subunit protein bL12 from Vibrio parahaemolyticus serotype O3:K6 (strain RIMD 2210633).